A 299-amino-acid polypeptide reads, in one-letter code: S-fimbrial protein subunit SfaH (299 aa).

This sequence belongs to the fimbrial protein family.

The protein localises to the fimbrium. Its function is as follows. Fimbriae (also called pili), polar filaments radiating from the surface of the bacterium to a length of 0.5-1.5 micrometers and numbering 100-300 per cell, enable bacteria to colonize the epithelium of specific host organs. A minor fimbrial subunit. This protein is necessary for full expression of S-specific binding. S-fimbrial adhesins enable pathogenic E.coli causing urinary-tract infections or newborn meningitis to attach to glycoproteins terminating with alpha-sialic acid-(2-3)-beta-Gal. The protein is S-fimbrial protein subunit SfaH (sfaH) of Escherichia coli O6:K15:H31 (strain 536 / UPEC).